We begin with the raw amino-acid sequence, 430 residues long: Glutamine synthetase, chloroplastic/mitochondrial (430 aa).

A chloroplast and mitochondrion-targeting transit peptide spans 1 to 45 (MAQILAASPTCQMRVPKHSSVIASSSKLWSSVVLKQKKQSNNKVR). Residues 77–157 (IIAEYIWIGG…VICDTWTPAG (81 aa)) form the GS beta-grasp domain. The tract at residues 97–122 (TIEKPVEDPSELPKWNYDGSSTGQAP) is disordered. A Phosphoserine modification is found at S106. The region spanning 161-430 (PTNKRAKAAE…LAAQKLSLNV (270 aa)) is the GS catalytic domain.

It belongs to the glutamine synthetase family. As to quaternary structure, homooctamer. Expressed in mesophyll and epidermal cells of leaves.

The protein resides in the plastid. It localises to the chloroplast. Its subcellular location is the mitochondrion. It carries out the reaction L-glutamate + NH4(+) + ATP = L-glutamine + ADP + phosphate + H(+). Its function is as follows. The light-modulated chloroplast/mitochondrial enzyme, encoded by a nuclear gene and expressed primarily in leaves, is responsible for the reassimilation of the ammonia generated by photorespiration. This chain is Glutamine synthetase, chloroplastic/mitochondrial (GLN2), found in Arabidopsis thaliana (Mouse-ear cress).